A 680-amino-acid polypeptide reads, in one-letter code: PAN2-PAN3 deadenylation complex subunit PAN3 (680 aa).

3 disordered regions span residues 1-26 (MATT…RADT), 51-87 (HDQT…SKKT), and 99-120 (FTPR…TDIP). The segment at 25 to 54 (DTKDTLCRNILIYGHCRYEDAGCAFNHDQT) adopts a C3H1-type zinc-finger fold. The span at 52 to 64 (DQTKKSPKPDATT) shows a compositional bias: basic and acidic residues. A PABPC-interacting motif-2 (PAM-2) motif is present at residues 62 to 82 (ATTRKTLNVDSAPFTPAVSSQ). A compositionally biased stretch (low complexity) spans 99–117 (FTPRATAATPTGTPTAQET). Positions 256 to 522 (QTMTGTAALQ…TVKNLVAGIN (267 aa)) are pseudokinase domain. Residues Arg311, 360-367 (EYYPLAET), and 422-423 (TK) each bind ATP. The stretch at 523-561 (EHVMTAFDAQQRQSDMLYSELYREVENGRVLRLLMKLAT) forms a coiled coil. Residues 562-680 (INERTEYDKD…VHHPSHRDRF (119 aa)) form a knob domain region. The span at 655–669 (SGNGRGGPVASGSGH) shows a compositional bias: gly residues. Residues 655–680 (SGNGRGGPVASGSGHGVHHPSHRDRF) are disordered. Basic residues predominate over residues 670-680 (GVHHPSHRDRF).

The protein belongs to the protein kinase superfamily. PAN3 family. In terms of assembly, homodimer. Forms a heterotrimer with a catalytic subunit PAN2 to form the poly(A)-nuclease (PAN) deadenylation complex. Interacts (via PAM-2 motif) with poly(A)-binding protein PAB1 (via PABC domain), conferring substrate specificity of the enzyme complex.

It localises to the cytoplasm. In terms of biological role, regulatory subunit of the poly(A)-nuclease (PAN) deadenylation complex, one of two cytoplasmic mRNA deadenylases involved in mRNA turnover. PAN specifically shortens poly(A) tails of RNA and the activity is stimulated by poly(A)-binding protein PAB1. PAN deadenylation is followed by rapid degradation of the shortened mRNA tails by the CCR4-NOT complex. Deadenylated mRNAs are then degraded by two alternative mechanisms, namely exosome-mediated 3'-5' exonucleolytic degradation, or deadenylation-dependent mRNA decaping and subsequent 5'-3' exonucleolytic degradation by XRN1. May also be involved in post-transcriptional maturation of mRNA poly(A) tails. PAN3 acts as a positive regulator for PAN activity, recruiting the catalytic subunit PAN2 to mRNA via its interaction with RNA and with PAB1. This chain is PAN2-PAN3 deadenylation complex subunit PAN3, found in Pyricularia oryzae (strain 70-15 / ATCC MYA-4617 / FGSC 8958) (Rice blast fungus).